A 1349-amino-acid chain; its full sequence is Spike glycoprotein (1349 aa).

A signal peptide spans 1–13 (MFFILLITLPSVF). Topologically, residues 14 to 1293 (AVIGDLKCNT…GTYEYYVKWP (1280 aa)) are extracellular. A BetaCoV S1-NTD domain is found at 15-298 (VIGDLKCNTS…DFMSEIMCKT (284 aa)). 7 disulfides stabilise this stretch: Cys21–Cys165, Cys160–Cys193, Cys172–Cys252, Cys286–Cys296, Cys331–Cys356, Cys374–Cys427, and Cys386–Cys601. 3 N-linked (GlcNAc...) asparagine; by host glycosylation sites follow: Asn22, Asn59, and Asn133. N-linked (GlcNAc...) asparagine; by host glycosylation is present at Asn198. Positions 329–603 (PNCDIEAWLN…DVNSGTTCST (275 aa)) constitute a BetaCoV S1-CTD domain. Residues Asn437, Asn456, Asn512, Asn611, Asn635, Asn662, Asn682, Asn700, Asn725, Asn774, and Asn881 are each glycosylated (N-linked (GlcNAc...) asparagine; by host). Fusion peptide stretches follow at residues 900–921 (SAIEDLLFDKVKLSDVGFVQAY) and 919–939 (QAYNNCTGGAEIRDLICVQSY). Asn923 carries an N-linked (GlcNAc...) asparagine; by host glycan. Cys924 and Cys935 form a disulfide bridge. Residues 1000 to 1050 (QKLIASAFNNALDSIQEGFDATNSALVKIQAVVNANAEALNNLLQQLSNRF) form a heptad repeat 1 region. Residues 1029–1073 (QAVVNANAEALNNLLQQLSNRFGAISASLQEILSRLDALEAKAQI) adopt a coiled-coil conformation. Asn1180, Asn1210, Asn1220, Asn1239, Asn1253, and Asn1274 each carry an N-linked (GlcNAc...) asparagine; by host glycan. The segment at 1244-1282 (APDLSFDYINVTFLDLQDEMNRLQEAIKVLNHSYINLKD) is heptad repeat 2. Residues 1255-1283 (TFLDLQDEMNRLQEAIKVLNHSYINLKDI) adopt a coiled-coil conformation. Residues 1294-1314 (WYVWLLICLAGVVMLVLLFFI) traverse the membrane as a helical segment. At 1315-1349 (CCCTGCGTSCFKKCGGCFDDYTGHQEFVIKTSHDD) the chain is on the cytoplasmic side. The short motif at 1345–1349 (TSHDD) is the KxHxx element.

The protein belongs to the betacoronaviruses spike protein family. As to quaternary structure, homotrimer; each monomer consists of a S1 and a S2 subunit. The resulting peplomers protrude from the virus surface as spikes. In terms of processing, specific enzymatic cleavages in vivo yield mature proteins. The precursor is processed into S1 and S2 by host cell furin or another cellular protease to yield the mature S1 and S2 proteins. Additionally, a second cleavage leads to the release of a fusion peptide after viral attachment to host cell receptor. The cytoplasmic Cys-rich domain is palmitoylated. Spike glycoprotein is digested within host endosomes.

The protein localises to the virion membrane. Its subcellular location is the host endoplasmic reticulum-Golgi intermediate compartment membrane. It is found in the host cell membrane. Functionally, attaches the virion to the cell membrane by interacting with host receptor, initiating the infection. In terms of biological role, mediates fusion of the virion and cellular membranes by acting as a class I viral fusion protein. Under the current model, the protein has at least three conformational states: pre-fusion native state, pre-hairpin intermediate state, and post-fusion hairpin state. During viral and target cell membrane fusion, the coiled coil regions (heptad repeats) assume a trimer-of-hairpins structure, positioning the fusion peptide in close proximity to the C-terminal region of the ectodomain. The formation of this structure appears to drive apposition and subsequent fusion of viral and target cell membranes. Acts as a viral fusion peptide which is unmasked following S2 cleavage occurring upon virus endocytosis. This Porcine hemagglutinating encephalomyelitis virus (strain IAF-404) (HEV) protein is Spike glycoprotein.